A 162-amino-acid chain; its full sequence is Large ribosomal subunit protein uL10 (162 aa).

It belongs to the universal ribosomal protein uL10 family. Part of the ribosomal stalk of the 50S ribosomal subunit. The N-terminus interacts with L11 and the large rRNA to form the base of the stalk. The C-terminus forms an elongated spine to which L12 dimers bind in a sequential fashion forming a multimeric L10(L12)X complex.

Functionally, forms part of the ribosomal stalk, playing a central role in the interaction of the ribosome with GTP-bound translation factors. The sequence is that of Large ribosomal subunit protein uL10 from Borrelia garinii subsp. bavariensis (strain ATCC BAA-2496 / DSM 23469 / PBi) (Borreliella bavariensis).